The primary structure comprises 225 residues: MSIKVWPKSERPREKLLQYGAENLSDAELIAVLLGKGVKGKNAVSVAHELLNELGCLRGVVTATKDEFAKVTGIGPCKYAQFQAGFEIFKRNLEIKLQREDVFNNVDDTKRYLQAKLRDCQREKFALLMLDSQHQLIAFRTMFNGTINSAAVYPRELIKQVMIDNAAAIILVHNHPSGVAEPSHADIRLTTEIKSAMASIDVPVLDHFVVGDKETISFAQRGLLT.

The region spanning valine 102 to leucine 224 is the MPN domain. Histidine 173, histidine 175, and aspartate 186 together coordinate Zn(2+). A JAMM motif motif is present at residues histidine 173–aspartate 186.

Belongs to the UPF0758 family.

This Alteromonas mediterranea (strain DSM 17117 / CIP 110805 / LMG 28347 / Deep ecotype) protein is UPF0758 protein MADE_1000235.